Consider the following 1342-residue polypeptide: DNA-directed RNA polymerase subunit beta (1342 aa).

It belongs to the RNA polymerase beta chain family. The RNAP catalytic core consists of 2 alpha, 1 beta, 1 beta' and 1 omega subunit. When a sigma factor is associated with the core the holoenzyme is formed, which can initiate transcription.

It carries out the reaction RNA(n) + a ribonucleoside 5'-triphosphate = RNA(n+1) + diphosphate. Its function is as follows. DNA-dependent RNA polymerase catalyzes the transcription of DNA into RNA using the four ribonucleoside triphosphates as substrates. This chain is DNA-directed RNA polymerase subunit beta, found in Actinobacillus pleuropneumoniae serotype 3 (strain JL03).